The primary structure comprises 327 residues: MIKIGNIELSSNVILAPMSNITDLEFRKLVKRFGAGLVVSEMIASRAMIMKSRQSMQKCAIMHDDPTSACVQLAGCEPDVIADAAKMNEDMGAKIIDLNFGCPAKKVVGGYAGSALMRDERLATKIFEATVKAVKIPVTVKMRMGWDDNTKNAPTLAVIAASSGVQMVTVHGRTRCQFYSGNANWDFIRVVKEAVKIPVIANGDITNFAKAKEALQKSGADGIMVGRGVYGKPWLISQIAYYLKTGKEKPAPSIAEQLDIIIKHYDAIIDYYGKSVGVPIARKHIIWYSSGLPSSAEFRCAVNLMNDPIAVKEKIAEFYMSVMDANK.

Residues 17–19 and Gln72 each bind FMN; that span reads PMS. Cys102 serves as the catalytic Proton donor. Residues Lys141, 202–204, and 226–227 contribute to the FMN site; these read NGD and GR.

Belongs to the Dus family. FMN serves as cofactor.

The enzyme catalyses a 5,6-dihydrouridine in tRNA + NAD(+) = a uridine in tRNA + NADH + H(+). It carries out the reaction a 5,6-dihydrouridine in tRNA + NADP(+) = a uridine in tRNA + NADPH + H(+). Functionally, catalyzes the synthesis of 5,6-dihydrouridine (D), a modified base found in the D-loop of most tRNAs, via the reduction of the C5-C6 double bond in target uridines. This is Probable tRNA-dihydrouridine synthase (dus) from Rickettsia typhi (strain ATCC VR-144 / Wilmington).